Here is a 173-residue protein sequence, read N- to C-terminus: Crossover junction endodeoxyribonuclease RuvC (173 aa).

Catalysis depends on residues D8, E67, and D139. Mg(2+)-binding residues include D8, E67, and D139.

This sequence belongs to the RuvC family. Homodimer which binds Holliday junction (HJ) DNA. The HJ becomes 2-fold symmetrical on binding to RuvC with unstacked arms; it has a different conformation from HJ DNA in complex with RuvA. In the full resolvosome a probable DNA-RuvA(4)-RuvB(12)-RuvC(2) complex forms which resolves the HJ. Mg(2+) serves as cofactor.

The protein localises to the cytoplasm. The catalysed reaction is Endonucleolytic cleavage at a junction such as a reciprocal single-stranded crossover between two homologous DNA duplexes (Holliday junction).. In terms of biological role, the RuvA-RuvB-RuvC complex processes Holliday junction (HJ) DNA during genetic recombination and DNA repair. Endonuclease that resolves HJ intermediates. Cleaves cruciform DNA by making single-stranded nicks across the HJ at symmetrical positions within the homologous arms, yielding a 5'-phosphate and a 3'-hydroxyl group; requires a central core of homology in the junction. The consensus cleavage sequence is 5'-(A/T)TT(C/G)-3'. Cleavage occurs on the 3'-side of the TT dinucleotide at the point of strand exchange. HJ branch migration catalyzed by RuvA-RuvB allows RuvC to scan DNA until it finds its consensus sequence, where it cleaves and resolves the cruciform DNA. The polypeptide is Crossover junction endodeoxyribonuclease RuvC (Vibrio parahaemolyticus serotype O3:K6 (strain RIMD 2210633)).